Consider the following 338-residue polypeptide: Secretory carrier-associated membrane protein 1 (338 aa).

A disordered region spans residues 1–63 (MSDFDSNPFA…PNVPSTQPAI (63 aa)). Ser2 carries the post-translational modification N-acetylserine. Ser2 carries the post-translational modification Phosphoserine. Residues 2–155 (SDFDSNPFAD…QKTVKIMYYL (154 aa)) are Cytoplasmic-facing. Thr45 carries the phosphothreonine modification. A helical membrane pass occupies residues 156-176 (WMFHAVTLFLNIFGCLAWFCV). At 177 to 181 (DPSRG) the chain is on the lumenal side. A helical membrane pass occupies residues 182 to 202 (VDFGLSILWFLLFTPCSFVCW). The Cytoplasmic segment spans residues 203 to 217 (YRPLYGAFRSDSSFR). Residues 218–238 (FFVFFFVYICQFAVHVLQAAG) form a helical membrane-spanning segment. The Lumenal segment spans residues 239–261 (FHNWGNCGWISSLTGLNQSIPVG). The chain crosses the membrane as a helical span at residues 262–282 (IMMIIIAALFTASAVISLVMF). Residues 283–338 (KKVHGLYRTTGASFEKAQQEFATGVMSNKTVQTAAANAASTAATSAAQNAFKGNQI) are Cytoplasmic-facing.

The protein belongs to the SCAMP family. Interacts with SYNRG, ITSN1 and SLC9A7.

It localises to the golgi apparatus. Its subcellular location is the trans-Golgi network membrane. The protein resides in the recycling endosome membrane. In terms of biological role, functions in post-Golgi recycling pathways. Acts as a recycling carrier to the cell surface. The polypeptide is Secretory carrier-associated membrane protein 1 (SCAMP1) (Sus scrofa (Pig)).